Reading from the N-terminus, the 700-residue chain is Myb-related protein B (700 aa).

HTH myb-type domains lie at 26–77 (RDSK…LRVL), 78–133 (NPDL…NPEV), and 134–184 (KKSC…KRKV). The H-T-H motif DNA-binding region spans 54–77 (WKFLASHFPNRTDQQCQYRWLRVL). Residue lysine 104 forms a Glycyl lysine isopeptide (Lys-Gly) (interchain with G-Cter in SUMO2) linkage. DNA-binding regions (H-T-H motif) lie at residues 106-129 (WTLI…HNHL) and 157-180 (WAEI…NSTI). Residues lysine 194 and lysine 197 each participate in a glycyl lysine isopeptide (Lys-Gly) (interchain with G-Cter in SUMO2) cross-link. Disordered regions lie at residues 212-287 (LQSA…PETS) and 391-412 (PISP…VLKR). Residues 213 to 229 (QSAQPTEGQGSLLTNWP) are compositionally biased toward polar residues. Serine 241 carries the post-translational modification Phosphoserine. At threonine 266 the chain carries Phosphothreonine. Lysine 275 is covalently cross-linked (Glycyl lysine isopeptide (Lys-Gly) (interchain with G-Cter in SUMO2)). Residues serine 282 and serine 393 each carry the phosphoserine modification. A Glycyl lysine isopeptide (Lys-Gly) (interchain with G-Cter in SUMO2) cross-link involves residue lysine 411. A Nuclear localization signal motif is present at residues 411–417 (KRQRKRR). A phosphothreonine; by CDK2 mark is found at threonine 440 and threonine 444. Glycyl lysine isopeptide (Lys-Gly) (interchain with G-Cter in SUMO2) cross-links involve residues lysine 447 and lysine 482. Phosphothreonine; by CDK2 occurs at positions 487 and 494. Lysine 499 is covalently cross-linked (Glycyl lysine isopeptide (Lys-Gly) (interchain with G-Cter in SUMO2)). A Phosphothreonine modification is found at threonine 505. Residue lysine 509 forms a Glycyl lysine isopeptide (Lys-Gly) (interchain with G-Cter in SUMO2) linkage. Phosphothreonine; by CDK2 is present on threonine 520. Residues lysine 523, lysine 533, and lysine 546 each participate in a glycyl lysine isopeptide (Lys-Gly) (interchain with G-Cter in SUMO2) cross-link. The short motif at 564 to 584 (RPEKQKRKPGLRRSPIKKVRK) is the Bipartite nuclear localization signal element. Serine 577 is modified (phosphoserine; by CDK2). Glycyl lysine isopeptide (Lys-Gly) (interchain with G-Cter in SUMO2) cross-links involve residues lysine 584, lysine 596, lysine 625, lysine 639, and lysine 648.

As to quaternary structure, component of the DREAM complex (also named LINC complex) at least composed of E2F4, E2F5, LIN9, LIN37, LIN52, LIN54, MYBL1, MYBL2, RBL1, RBL2, RBBP4, TFDP1 and TFDP2. The complex exists in quiescent cells where it represses cell cycle-dependent genes. It dissociates in S phase when LIN9, LIN37, LIN52 and LIN54 form a subcomplex that binds to MYBL22. Interacts with CCNF (via the Cyclin N-terminal domain). Post-translationally, phosphorylated by cyclin A/CDK2 during S-phase. Phosphorylation at Thr-520 is probably involved in transcriptional activity.

It localises to the nucleus. Transcription factor involved in the regulation of cell survival, proliferation, and differentiation. Transactivates the expression of the CLU gene. The polypeptide is Myb-related protein B (MYBL2) (Homo sapiens (Human)).